The sequence spans 340 residues: Deubiquitinase SseL (340 aa).

His222 is a catalytic residue. Cys284 acts as the Nucleophile in catalysis.

Belongs to the peptidase C79 family.

The protein resides in the secreted. It is found in the host cytoplasm. In terms of biological role, effector proteins function to alter host cell physiology and promote bacterial survival in host tissues. This protease targets the host cell ubiquitin pathway by acting as a deubiquitinase in infected host cells. This chain is Deubiquitinase SseL (sseL), found in Salmonella arizonae (strain ATCC BAA-731 / CDC346-86 / RSK2980).